A 140-amino-acid polypeptide reads, in one-letter code: Cysteine desulfuration protein SufE (140 aa).

The active-site Cysteine persulfide intermediate is the Cys-51.

This sequence belongs to the SufE family. As to quaternary structure, homodimer. Interacts with SufS.

It is found in the cytoplasm. It functions in the pathway cofactor biosynthesis; iron-sulfur cluster biosynthesis. Participates in cysteine desulfuration mediated by SufS. Cysteine desulfuration mobilizes sulfur from L-cysteine to yield L-alanine and constitutes an essential step in sulfur metabolism for biosynthesis of a variety of sulfur-containing biomolecules. Functions as a sulfur acceptor for SufS, by mediating the direct transfer of the sulfur atom from the S-sulfanylcysteine of SufS, an intermediate product of cysteine desulfuration process. The chain is Cysteine desulfuration protein SufE from Yersinia pestis bv. Antiqua (strain Antiqua).